The primary structure comprises 192 residues: Probable nicotinate-nucleotide adenylyltransferase (192 aa).

Belongs to the NadD family.

It carries out the reaction nicotinate beta-D-ribonucleotide + ATP + H(+) = deamido-NAD(+) + diphosphate. The protein operates within cofactor biosynthesis; NAD(+) biosynthesis; deamido-NAD(+) from nicotinate D-ribonucleotide: step 1/1. In terms of biological role, catalyzes the reversible adenylation of nicotinate mononucleotide (NaMN) to nicotinic acid adenine dinucleotide (NaAD). This chain is Probable nicotinate-nucleotide adenylyltransferase, found in Rhizobium etli (strain ATCC 51251 / DSM 11541 / JCM 21823 / NBRC 15573 / CFN 42).